Reading from the N-terminus, the 360-residue chain is Photosystem II protein D1 (360 aa).

Transmembrane regions (helical) follow at residues Y29–S46, H118–L133, and W142–A156. Chlorophyll a is bound at residue H118. Y126 contacts pheophytin a. [CaMn4O5] cluster-binding residues include D170 and E189. The chain crosses the membrane as a helical span at residues F197–L218. H198 contributes to the chlorophyll a binding site. Residues H215 and S264 to F265 contribute to the a quinone site. Residue H215 participates in Fe cation binding. Position 272 (H272) interacts with Fe cation. Residues F274–L288 form a helical membrane-spanning segment. 4 residues coordinate [CaMn4O5] cluster: H332, E333, D342, and A344. A propeptide spanning residues S345–G360 is cleaved from the precursor.

Belongs to the reaction center PufL/M/PsbA/D family. In terms of assembly, PSII is composed of 1 copy each of membrane proteins PsbA, PsbB, PsbC, PsbD, PsbE, PsbF, PsbH, PsbI, PsbJ, PsbK, PsbL, PsbM, PsbT, PsbX, PsbY, PsbZ, Psb30/Ycf12, at least 3 peripheral proteins of the oxygen-evolving complex and a large number of cofactors. It forms dimeric complexes. The D1/D2 heterodimer binds P680, chlorophylls that are the primary electron donor of PSII, and subsequent electron acceptors. It shares a non-heme iron and each subunit binds pheophytin, quinone, additional chlorophylls, carotenoids and lipids. D1 provides most of the ligands for the Mn4-Ca-O5 cluster of the oxygen-evolving complex (OEC). There is also a Cl(-1) ion associated with D1 and D2, which is required for oxygen evolution. The PSII complex binds additional chlorophylls, carotenoids and specific lipids. is required as a cofactor. In terms of processing, tyr-161 forms a radical intermediate that is referred to as redox-active TyrZ, YZ or Y-Z. Post-translationally, C-terminally processed by CTPA; processing is essential to allow assembly of the oxygen-evolving complex and thus photosynthetic growth.

The protein resides in the plastid. Its subcellular location is the chloroplast thylakoid membrane. It catalyses the reaction 2 a plastoquinone + 4 hnu + 2 H2O = 2 a plastoquinol + O2. Functionally, photosystem II (PSII) is a light-driven water:plastoquinone oxidoreductase that uses light energy to abstract electrons from H(2)O, generating O(2) and a proton gradient subsequently used for ATP formation. It consists of a core antenna complex that captures photons, and an electron transfer chain that converts photonic excitation into a charge separation. The D1/D2 (PsbA/PsbD) reaction center heterodimer binds P680, the primary electron donor of PSII as well as several subsequent electron acceptors. In Heterosigma akashiwo (Chromophytic alga), this protein is Photosystem II protein D1.